The sequence spans 338 residues: Glycerol-3-phosphate dehydrogenase [NAD(P)+] (338 aa).

Tryptophan 20 and lysine 110 together coordinate NADPH. Residues lysine 110, glycine 141, and serine 143 each coordinate sn-glycerol 3-phosphate. Position 145 (alanine 145) interacts with NADPH. The sn-glycerol 3-phosphate site is built by lysine 197, aspartate 250, serine 260, arginine 261, and asparagine 262. Lysine 197 functions as the Proton acceptor in the catalytic mechanism. NADPH is bound at residue arginine 261. Glutamate 287 is a binding site for NADPH.

Belongs to the NAD-dependent glycerol-3-phosphate dehydrogenase family.

The protein localises to the cytoplasm. It carries out the reaction sn-glycerol 3-phosphate + NAD(+) = dihydroxyacetone phosphate + NADH + H(+). The catalysed reaction is sn-glycerol 3-phosphate + NADP(+) = dihydroxyacetone phosphate + NADPH + H(+). The protein operates within membrane lipid metabolism; glycerophospholipid metabolism. Functionally, catalyzes the reduction of the glycolytic intermediate dihydroxyacetone phosphate (DHAP) to sn-glycerol 3-phosphate (G3P), the key precursor for phospholipid synthesis. The chain is Glycerol-3-phosphate dehydrogenase [NAD(P)+] from Aster yellows witches'-broom phytoplasma (strain AYWB).